A 302-amino-acid chain; its full sequence is tRNA-cytidine(32) 2-sulfurtransferase (302 aa).

Residues 45–50 (SGGKDS) carry the PP-loop motif motif. Residues Cys120, Cys123, and Cys211 each contribute to the [4Fe-4S] cluster site.

It belongs to the TtcA family. In terms of assembly, homodimer. Requires Mg(2+) as cofactor. It depends on [4Fe-4S] cluster as a cofactor.

It localises to the cytoplasm. It carries out the reaction cytidine(32) in tRNA + S-sulfanyl-L-cysteinyl-[cysteine desulfurase] + AH2 + ATP = 2-thiocytidine(32) in tRNA + L-cysteinyl-[cysteine desulfurase] + A + AMP + diphosphate + H(+). It participates in tRNA modification. Its function is as follows. Catalyzes the ATP-dependent 2-thiolation of cytidine in position 32 of tRNA, to form 2-thiocytidine (s(2)C32). The sulfur atoms are provided by the cysteine/cysteine desulfurase (IscS) system. The protein is tRNA-cytidine(32) 2-sulfurtransferase of Aeromonas salmonicida (strain A449).